A 385-amino-acid chain; its full sequence is tRNA N6-adenosine threonylcarbamoyltransferase (385 aa).

A divalent metal cation-binding residues include H140, H144, and Y161. Substrate is bound by residues 161-165 (YVSGG), D193, G208, E212, and N314. D343 provides a ligand contact to a divalent metal cation.

Belongs to the KAE1 / TsaD family. In terms of assembly, component of the EKC/KEOPS complex composed of at least BUD32, CGI121, GON7, KAE1 and PCC1; the whole complex dimerizes. It depends on a divalent metal cation as a cofactor.

It localises to the cytoplasm. The protein resides in the nucleus. It carries out the reaction L-threonylcarbamoyladenylate + adenosine(37) in tRNA = N(6)-L-threonylcarbamoyladenosine(37) in tRNA + AMP + H(+). Its function is as follows. Component of the EKC/KEOPS complex that is required for the formation of a threonylcarbamoyl group on adenosine at position 37 (t(6)A37) in tRNAs that read codons beginning with adenine. The complex is probably involved in the transfer of the threonylcarbamoyl moiety of threonylcarbamoyl-AMP (TC-AMP) to the N6 group of A37. KAE1 likely plays a direct catalytic role in this reaction, but requires other protein(s) of the complex to fulfill this activity. The EKC/KEOPS complex also promotes both telomere uncapping and telomere elongation. The complex is required for efficient recruitment of transcriptional coactivators. The chain is tRNA N6-adenosine threonylcarbamoyltransferase from Eremothecium gossypii (strain ATCC 10895 / CBS 109.51 / FGSC 9923 / NRRL Y-1056) (Yeast).